The following is a 337-amino-acid chain: 2-oxoglutarate receptor 1 (337 aa).

Residues 1-37 (MIETLDSPANDSDFLDYITALENCTDEQISFKMQYLP) lie on the Extracellular side of the membrane. N23 carries N-linked (GlcNAc...) asparagine glycosylation. Residues 38–58 (VIYSIIFLVGFPGNTVAISIY) traverse the membrane as a helical segment. The Cytoplasmic segment spans residues 59 to 69 (VFKMRPWKSST). A helical transmembrane segment spans residues 70–90 (IIMLNLALTDLLYLTSLPFLI). Over 91–116 (HYYASGENWIFGDFMCKFIRFGFHFN) the chain is Extracellular. Cysteines 106 and 183 form a disulfide. The chain crosses the membrane as a helical span at residues 117–137 (LYSSILFLTCFSLFRYIVIIH). At 138–151 (PMSCFSIQKTRWAV) the chain is on the cytoplasmic side. The chain crosses the membrane as a helical span at residues 152–172 (VACAGVWVISLVAVMPMTFLI). Topologically, residues 173–200 (TSTTRTNRSACLDLTSSDDLTTIKWYNL) are extracellular. The helical transmembrane segment at 201–221 (ILTATTFCLPLLIVTLCYTTI) threads the bilayer. At 222–242 (ISTLTHGPRTHSCFKQKARRL) the chain is on the cytoplasmic side. A helical membrane pass occupies residues 243-263 (TILLLLVFYVCFLPFHILRVI). Over 264-284 (RIESRLLSISCSIESHIHEAY) the chain is Extracellular. A helical membrane pass occupies residues 285–305 (IVSRPLAALNTFGNLLLYVVV). The Cytoplasmic segment spans residues 306-337 (SNNFQQAFCSAVRCKAIGDLEQAKKDSCSNNP).

Belongs to the G-protein coupled receptor 1 family. As to expression, highly expressed in mast cells and is found predominantly in the tissues of the respiratory tract and kidneys.

The protein resides in the cell membrane. In terms of biological role, g protein-coupled receptor for dicarboxylates and amino dicarboxylates. Receptor for itaconate, a metabolite produced by myeloid lineages. In the respiratory epithelium, couples the binding of itaconate to the activation of GNA11 and downstream intracellular Ca(2+) release, leading to mucocilliary clearance of airborne pathogens. Receptor for leukotriene E4 (LTE4) produced by mast cells upon allergic inflammation. Binds with high affinity to LTE4 and elicits mucin release from pulmonary epithelium in response to airborne fungi allergens. Regulates mucin-producing goblet cell homeostasis. Receptor for alpha-ketoglutarate produced by proximal tubule renal cells upon metabolic alkalosis. In an intrarenal paracrine signaling pathway, binds alpha-ketoglutarate and drives transepithelial salt reabsorption and bicarbonate secretion by SLC26A4/pendrin-positive intercalated cells. This chain is 2-oxoglutarate receptor 1 (Oxgr1), found in Rattus norvegicus (Rat).